Consider the following 175-residue polypeptide: uncharacterized protein (175 aa).

A signal peptide spans 1-23 (MILVLLLILIAFLYIYFPSSLNQ).

This is an uncharacterized protein from Invertebrate iridescent virus 6 (IIV-6).